The following is a 328-amino-acid chain: Arylacetonitrilase (328 aa).

Positions 5–278 constitute a CN hydrolase domain; sequence VRVAVTQAEP…EGIIYADLDF (274 aa). Glu45 serves as the catalytic Proton acceptor. The active site involves Lys125. Cys160 acts as the Nucleophile in catalysis.

The protein belongs to the carbon-nitrogen hydrolase superfamily. Nitrilase family.

The catalysed reaction is a nitrile + 2 H2O = a carboxylate + NH4(+). It carries out the reaction 4-chlorophenylacetonitrile + 2 H2O = 4-chlorophenylacetate + NH4(+). Its function is as follows. Nitrilase that hydrolyzes preferentially phenylacetonitrile, (R,S)-mandelonitrile, and 3-indolylacetonitrile. This is Arylacetonitrilase from Aspergillus niger (strain ATCC MYA-4892 / CBS 513.88 / FGSC A1513).